The following is an 812-amino-acid chain: MSNPVSINNSGSISNSNLNNESLSPSRLSSSPNSKSMELNGKRTLKSSVVKTLLNRSSSGNNLNNTVTTRRAAGSFTSNYQNIYTPNNNSYNSSNNNNNNNNDDDTVSVDGDNPPDSPKSTKDHSNSVGSNSGGGGGGSSGGLNMSMNNIKQQQQDNLIKQQQKDRSLWTVRSLKEHAEVLDIMERLKPVNRAISFGQIYAREETQFDFDPLIGRDTMLQLILQHLQFEGLMDSRKLLEEEARVQYPEYAINESRLVTLLRTALKDSERVFQLTLDDKKRDSQQQLEEHLAFLGLFKDETATDIMGEDVNIYDEPENSNIIYVDDKEKEKEKEKEKEKEKDKFGPNSTNSLSGSGSSPNIPSGMNNNSSSIGNNSIGNSNSYSNGELSPLSASTLLMMSPQNKNSIETNKPQVKAASLNKLVILLTPDNNHDLEYTKTFLLTYQSFTTPEMLLEKLVQRYHVPQKPGQSLDDWKKSAVPIQLRVANVIRTWIKDYFSDFNDKLIQNVKSLYENMKQSGNMSHAKILSESLNAKIKGMVGMDDQKRAPTFTSPAPEPKVPKNIWSQTLDIFSVDEEEIARQLTLMDFEIFSAIKSTELLNQSWNKPKLRHRSPNVLTLINRFNEISQWTATSILSYPKVKDRARIMAKFIKIAEYCMRHLNNFNTSMAILSGLNASSVHRLKFTKEELPKHTQQVYTELQFHLSSAQAYKEYRALLAKANPPCLPYLGVYLTDLTFFEEGNPDFIQGFINFGKRKLIYGSISNVQSFQNAKYNLQPVYQITKLLKGFKLLEENDLYSRSMSFEPRNKERSEIL.

Low complexity-rich tracts occupy residues 1-36 and 53-65; these read MSNPVSINNSGSISNSNLNNESLSPSRLSSSPNSKS and LLNRSSSGNNLNN. A disordered region spans residues 1 to 146; the sequence is MSNPVSINNS…GGSSGGLNMS (146 aa). Positions 75–86 are enriched in polar residues; that stretch reads SFTSNYQNIYTP. The span at 87 to 101 shows a compositional bias: low complexity; it reads NNNSYNSSNNNNNNN. The segment covering 131 to 141 has biased composition (gly residues); the sequence is NSGGGGGGSSG. Residues 214 to 246 enclose the LisH domain; sequence GRDTMLQLILQHLQFEGLMDSRKLLEEEARVQY. A disordered region spans residues 320–382; sequence IIYVDDKEKE…NNSIGNSNSY (63 aa). Residues 323–343 are compositionally biased toward basic and acidic residues; sequence VDDKEKEKEKEKEKEKEKDKF. The segment covering 344 to 382 has biased composition (low complexity); sequence GPNSTNSLSGSGSSPNIPSGMNNNSSSIGNNSIGNSNSY. The N-terminal Ras-GEF domain occupies 409-535; it reads NKPQVKAASL…LSESLNAKIK (127 aa). The 232-residue stretch at 573 to 804 folds into the Ras-GEF domain; the sequence is DEEEIARQLT…YSRSMSFEPR (232 aa).

Functionally, promotes the exchange of Ras-bound GDP by GTP. The chain is Ras guanine nucleotide exchange factor J (gefJ) from Dictyostelium discoideum (Social amoeba).